The following is a 65-amino-acid chain: Large ribosomal subunit protein uL29 (65 aa).

This sequence belongs to the universal ribosomal protein uL29 family.

This is Large ribosomal subunit protein uL29 from Acidithiobacillus ferrooxidans (strain ATCC 23270 / DSM 14882 / CIP 104768 / NCIMB 8455) (Ferrobacillus ferrooxidans (strain ATCC 23270)).